Here is a 356-residue protein sequence, read N- to C-terminus: Glutenin, low molecular weight subunit (356 aa).

Residues 1 to 19 (MKTFLVFALLALAAASAVA) form the signal peptide. The disordered stretch occupies residues 20–179 (QISQQQQAPP…LQQQRPPFSR (160 aa)).

The protein belongs to the gliadin/glutenin family. In terms of assembly, disulfide-bridge linked aggregates.

Functionally, glutenins are high-molecular weight seed storage proteins of wheat endosperm. Thought to be responsible for the visco-elastic property of wheat dough. The protein is Glutenin, low molecular weight subunit of Triticum aestivum (Wheat).